A 564-amino-acid polypeptide reads, in one-letter code: MFS-type efflux pump LUC4 (564 aa).

A compositionally biased stretch (polar residues) spans 1 to 15 (MGQSQDNTQLTTASP). Positions 1-35 (MGQSQDNTQLTTASPQAEKDLSSNDNPPESEPAAP) are disordered. 5 helical membrane-spanning segments follow: residues 42-62 (WLVF…TSII), 78-98 (LYVW…PIFA), 108-128 (SLTL…GGAH), 141-161 (GVGG…MVSV), and 170-190 (IIGG…GAFA). N-linked (GlcNAc...) asparagine glycosylation is present at Asn192. The next 3 membrane-spanning stretches (helical) occupy residues 197–217 (WIFY…IVFL), 236–256 (WGGS…LSWG), and 268–288 (LVPL…QGAP). N-linked (GlcNAc...) asparagine glycosylation is present at Asn302. 5 helical membrane-spanning segments follow: residues 308-328 (LFVI…FLPV), 343-363 (VMLF…GIFI), 371-391 (VWHF…TLLD), 404-424 (LLFG…ILAS), and 436-456 (AWTF…AAAF). Asn461 is a glycosylation site (N-linked (GlcNAc...) asparagine). The chain crosses the membrane as a helical span at residues 512–532 (KLVWQVSIAFSVLGFVLAFLV).

It belongs to the major facilitator superfamily. TCR/Tet family.

Its subcellular location is the membrane. Functionally, MFS-type efflux pump; part of the gene cluster that mediates the biosynthesis of the mycotoxin lucilactaene and the lucilactaene-related compound NG-391 that act as cell cycle inhibitors with potent growth inhibitory activity against malarial parasites, moderate growth inhibitory activity against cancer cells, and no activity against bacteria and fungi. The sequence is that of MFS-type efflux pump LUC4 from Fusarium sp.